The sequence spans 416 residues: Serine hydroxymethyltransferase (416 aa).

(6S)-5,6,7,8-tetrahydrofolate contacts are provided by residues Leu-119 and 123 to 125 (GHL). Residue Lys-228 is modified to N6-(pyridoxal phosphate)lysine.

This sequence belongs to the SHMT family. Homodimer. Requires pyridoxal 5'-phosphate as cofactor.

It localises to the cytoplasm. It carries out the reaction (6R)-5,10-methylene-5,6,7,8-tetrahydrofolate + glycine + H2O = (6S)-5,6,7,8-tetrahydrofolate + L-serine. The protein operates within one-carbon metabolism; tetrahydrofolate interconversion. It functions in the pathway amino-acid biosynthesis; glycine biosynthesis; glycine from L-serine: step 1/1. Functionally, catalyzes the reversible interconversion of serine and glycine with tetrahydrofolate (THF) serving as the one-carbon carrier. This reaction serves as the major source of one-carbon groups required for the biosynthesis of purines, thymidylate, methionine, and other important biomolecules. Also exhibits THF-independent aldolase activity toward beta-hydroxyamino acids, producing glycine and aldehydes, via a retro-aldol mechanism. This chain is Serine hydroxymethyltransferase, found in Moorella thermoacetica (strain ATCC 39073 / JCM 9320).